A 117-amino-acid chain; its full sequence is Ribosome-binding factor A (117 aa).

The protein belongs to the RbfA family. Monomer. Binds 30S ribosomal subunits, but not 50S ribosomal subunits or 70S ribosomes.

It localises to the cytoplasm. One of several proteins that assist in the late maturation steps of the functional core of the 30S ribosomal subunit. Associates with free 30S ribosomal subunits (but not with 30S subunits that are part of 70S ribosomes or polysomes). Required for efficient processing of 16S rRNA. May interact with the 5'-terminal helix region of 16S rRNA. This chain is Ribosome-binding factor A, found in Leuconostoc citreum (strain KM20).